The sequence spans 117 residues: Large ribosomal subunit protein bL19 (117 aa).

This sequence belongs to the bacterial ribosomal protein bL19 family.

In terms of biological role, this protein is located at the 30S-50S ribosomal subunit interface and may play a role in the structure and function of the aminoacyl-tRNA binding site. The chain is Large ribosomal subunit protein bL19 from Shewanella frigidimarina (strain NCIMB 400).